A 275-amino-acid polypeptide reads, in one-letter code: MSQQLQQIIDTAWENRAELSPKAAPADVREAVAHALEQLDKGALRVAEKIDGNWTVHQWLKKAVLLSFRLEDNAPMPAGGYSQFYDKVPSKFANYTAEDFAAGGFRVVPPAIARRGSFIAKNVVLMPSYTNIGAYVDEGTMVDTWATVGSCAQIGKNVHLSGGVGIGGVLEPLQANPVIIEDNCFIGARSEVVEGVIVEENSVISMGVYLGQSTKIYDRETGEVSYGRIPAGSVVVAGNLPSKDGSHSLYCAVIVKKVDAKTRAKVGLNELLRGD.

Substrate is bound by residues arginine 106 and aspartate 143.

Belongs to the transferase hexapeptide repeat family. As to quaternary structure, homotrimer.

The protein resides in the cytoplasm. It carries out the reaction (S)-2,3,4,5-tetrahydrodipicolinate + succinyl-CoA + H2O = (S)-2-succinylamino-6-oxoheptanedioate + CoA. Its pathway is amino-acid biosynthesis; L-lysine biosynthesis via DAP pathway; LL-2,6-diaminopimelate from (S)-tetrahydrodipicolinate (succinylase route): step 1/3. The polypeptide is 2,3,4,5-tetrahydropyridine-2,6-dicarboxylate N-succinyltransferase (Burkholderia ambifaria (strain ATCC BAA-244 / DSM 16087 / CCUG 44356 / LMG 19182 / AMMD) (Burkholderia cepacia (strain AMMD))).